The chain runs to 640 residues: Chaperone protein dnaK2 (640 aa).

Position 197 is a phosphothreonine; by autocatalysis (threonine 197). Positions 605 to 640 (VYQSAQSSDGTGSSSSGGSGSGGDDEVIDAEFSETK) are disordered. Acidic residues predominate over residues 627-640 (GDDEVIDAEFSETK).

Belongs to the heat shock protein 70 family.

Its function is as follows. Acts as a chaperone. In Thermosynechococcus vestitus (strain NIES-2133 / IAM M-273 / BP-1), this protein is Chaperone protein dnaK2 (dnaK2).